A 242-amino-acid polypeptide reads, in one-letter code: Ubiquinone biosynthesis O-methyltransferase (242 aa).

S-adenosyl-L-methionine contacts are provided by Arg44, Gly64, Asp85, and Met129.

Belongs to the methyltransferase superfamily. UbiG/COQ3 family.

The enzyme catalyses a 3-demethylubiquinol + S-adenosyl-L-methionine = a ubiquinol + S-adenosyl-L-homocysteine + H(+). It catalyses the reaction a 3-(all-trans-polyprenyl)benzene-1,2-diol + S-adenosyl-L-methionine = a 2-methoxy-6-(all-trans-polyprenyl)phenol + S-adenosyl-L-homocysteine + H(+). It functions in the pathway cofactor biosynthesis; ubiquinone biosynthesis. O-methyltransferase that catalyzes the 2 O-methylation steps in the ubiquinone biosynthetic pathway. This Salmonella choleraesuis (strain SC-B67) protein is Ubiquinone biosynthesis O-methyltransferase.